The following is a 725-amino-acid chain: Ribonuclease R (725 aa).

Positions 264-592 (RQDLTDLAFV…IHRLLWMHLF (329 aa)) constitute an RNB domain. The S1 motif domain maps to 644 to 725 (GKTFSGFISA…IQKRAILTLI (82 aa)).

It belongs to the RNR ribonuclease family. RNase R subfamily.

The protein localises to the cytoplasm. It carries out the reaction Exonucleolytic cleavage in the 3'- to 5'-direction to yield nucleoside 5'-phosphates.. Functionally, 3'-5' exoribonuclease that releases 5'-nucleoside monophosphates and is involved in maturation of structured RNAs. The polypeptide is Ribonuclease R (Mycoplasma genitalium (strain ATCC 33530 / DSM 19775 / NCTC 10195 / G37) (Mycoplasmoides genitalium)).